The sequence spans 234 residues: MSIEVVEVRPHELHYGVYVVRFEDGTERLATRNLTPGRRVYGERLIKWEGVEYREWNPYRSKLAAAILNGLKLVPIREGTHMLYLGAASGTTPSHISDIVGERGLIYSVEFSPRVFREFMEKLVDQGRRNVIPILGDARFPYQYAHYIKGVDVVYIDVAQPAQAKILADNADYFLKPGGYVMLVIKAMSIDVTAPATETFKQEINTLKERGFDVLETVHLEPYDTAHAMVIARK.

S-adenosyl-L-methionine-binding positions include threonine 91–threonine 92, glutamate 110–phenylalanine 111, aspartate 137–alanine 138, and aspartate 157–glutamine 160.

This sequence belongs to the methyltransferase superfamily. Fibrillarin family. As to quaternary structure, interacts with nop5. Component of box C/D small ribonucleoprotein (sRNP) particles that contain rpl7ae, FlpA and nop5, plus a guide RNA.

Functionally, involved in pre-rRNA and tRNA processing. Utilizes the methyl donor S-adenosyl-L-methionine to catalyze the site-specific 2'-hydroxyl methylation of ribose moieties in rRNA and tRNA. Site specificity is provided by a guide RNA that base pairs with the substrate. Methylation occurs at a characteristic distance from the sequence involved in base pairing with the guide RNA. In Pyrobaculum calidifontis (strain DSM 21063 / JCM 11548 / VA1), this protein is Fibrillarin-like rRNA/tRNA 2'-O-methyltransferase.